The primary structure comprises 707 residues: Lipase maturation factor 2 (707 aa).

10 consecutive transmembrane segments (helical) span residues Leu10–Ile30, Leu78–Leu98, Val102–Leu122, Tyr123–Leu143, Asp165–Val185, Leu227–Ile247, Val259–Leu279, Ala310–Gly330, Leu364–Leu384, and Ala399–Val419. N-linked (GlcNAc...) asparagine glycans are attached at residues Asn489 and Asn616. Residues Ala637–Ala657 form a helical membrane-spanning segment. The interval Pro665–Lys707 is disordered. The segment covering Gln679 to Ala691 has biased composition (polar residues).

The protein belongs to the lipase maturation factor family.

The protein resides in the endoplasmic reticulum membrane. Involved in the maturation of specific proteins in the endoplasmic reticulum. May be required for maturation and transport of active lipoprotein lipase (LPL) through the secretory pathway. This is Lipase maturation factor 2 (LMF2) from Homo sapiens (Human).